The chain runs to 220 residues: Adenylate kinase (220 aa).

Position 10–15 (10–15) interacts with ATP; the sequence is GAGKGT. Positions 30 to 59 are NMP; it reads STGDMLRAAVKAGTPLGLKAKEVMDGGNLV. Residues threonine 31, arginine 36, 57–59, 85–88, and glutamine 92 each bind AMP; these read NLV and GFPR. Positions 122 to 159 are LID; it reads GRRVHPASGRTYHIRFNPPQTAGMDDETGEPLVQRADD. Residues arginine 123 and 132–133 contribute to the ATP site; that span reads TY. 2 residues coordinate AMP: arginine 156 and arginine 167. Glycine 205 provides a ligand contact to ATP.

This sequence belongs to the adenylate kinase family. As to quaternary structure, monomer.

Its subcellular location is the cytoplasm. The catalysed reaction is AMP + ATP = 2 ADP. The protein operates within purine metabolism; AMP biosynthesis via salvage pathway; AMP from ADP: step 1/1. Its function is as follows. Catalyzes the reversible transfer of the terminal phosphate group between ATP and AMP. Plays an important role in cellular energy homeostasis and in adenine nucleotide metabolism. This Chlorobium luteolum (strain DSM 273 / BCRC 81028 / 2530) (Pelodictyon luteolum) protein is Adenylate kinase.